We begin with the raw amino-acid sequence, 217 residues long: MHRNDSQRLGKPGGAPESLQMANNNFLSTLSPEHCRPLAGECMNKLKCGAAEAEIMNLPERVGTFSAIPALGGISLPPGVIVMTALHSPAAASAAVTDSAFQIANLADCPQNNSSGAGGNPAKKKRKRCGVCVPCKRLINCGVCSSCRNRKTGHQICKFRKCEELKKKPGTSLEVRGDDSFFPCLASSLIPPFSPPFQCFLSPFKMHHSFSESPSRL.

Residues 1 to 20 (MHRNDSQRLGKPGGAPESLQ) form a disordered region. The CXXC-type zinc finger occupies 122–163 (AKKKRKRCGVCVPCKRLINCGVCSSCRNRKTGHQICKFRKCE). Zn(2+)-binding residues include Cys129, Cys132, Cys135, Cys141, Cys144, Cys147, Cys157, and Cys162.

It is found in the cytoplasm. In terms of biological role, acts as a negative regulator of the Wnt signaling pathway required for anterior neural structure formation. Ectopic expression induces ventralization. Binds preferentially to DNA containing cytidine-phosphate-guanosine (CpG) dinucleotides over CpH (H=A, T, and C), hemimethylated-CpG and hemimethylated-hydroxymethyl-CpG. This is CXXC-type zinc finger protein 4 (cxxc4) from Xenopus laevis (African clawed frog).